Here is a 352-residue protein sequence, read N- to C-terminus: uncharacterized protein (352 aa).

The first 21 residues, 1–21 (MNVDSRVFRFFLVFLILVVVA), serve as a signal peptide directing secretion.

This sequence belongs to the bacterial solute-binding protein 1 family. WtpA subfamily.

This is an uncharacterized protein from Methanosarcina acetivorans (strain ATCC 35395 / DSM 2834 / JCM 12185 / C2A).